The primary structure comprises 620 residues: MALLQIAEPGQSAAPHQHRLAVGIDLGTTNSLVAAVRSGVTATLPDENGQHSLPSIVRYTQEGIEVGYVAAMSSAQDPKNTIVSVKRFMGRSLTDIQSGEQSFPYQFEASENGLPLFVTPQGLVNPVQVSAEILRPLIERAEKTLGGELQGAVITVPAYFDDAQRQGTKDAASLLGVKVLRLLNEPTAAAIAYGLDSKQEGVIAIYDLGGGTFDISILRLNRGVFEVLATGGDSALGGDDFDHLLQAHMLQVWQLTDIDSQLSRQLLIEARRVKEALTYASDTEASLTLADGSVLKQVVTKAQFEGLIAALVKKTIASCRRTLRDAGVTADEVLETVMVGGSTRVPLVREQVEAFFGKAPLTSIDPDRVVAIGAAIQADILVGNKPESELLLLDVIPLSLGIETMGGLVEKVVSRNTTIPVARAQEFTTFKDGQTAMAFHVVQGERELVDDCRSLARFTLKGIPPLAAGAAHIRVTFQVDADGLLSVTAMEKSTGVQSSIQVKPSFGLSDSEIATMLKDSMKHAKEDIGRRMLAEQQVEAARVLESLNAALSKDGDLLTSDERQQIDTVMAELVQVAGSDDADTIKKAIEILDEHTQDFAAKRMDNSIRVAFKGQSIDKI.

The protein belongs to the heat shock protein 70 family.

Its function is as follows. Chaperone involved in the maturation of iron-sulfur cluster-containing proteins. Has a low intrinsic ATPase activity which is markedly stimulated by HscB. This Shewanella oneidensis (strain ATCC 700550 / JCM 31522 / CIP 106686 / LMG 19005 / NCIMB 14063 / MR-1) protein is Chaperone protein HscA homolog.